The chain runs to 166 residues: Orotate phosphoribosyltransferase (166 aa).

Residues Arg83, Lys84, His89, and 109 to 117 (DDVATTGGS) each bind 5-phospho-alpha-D-ribose 1-diphosphate. Residues Thr113 and Arg141 each contribute to the orotate site.

This sequence belongs to the purine/pyrimidine phosphoribosyltransferase family. PyrE subfamily. In terms of assembly, homodimer. Mg(2+) is required as a cofactor.

It carries out the reaction orotidine 5'-phosphate + diphosphate = orotate + 5-phospho-alpha-D-ribose 1-diphosphate. Its pathway is pyrimidine metabolism; UMP biosynthesis via de novo pathway; UMP from orotate: step 1/2. Catalyzes the transfer of a ribosyl phosphate group from 5-phosphoribose 1-diphosphate to orotate, leading to the formation of orotidine monophosphate (OMP). The sequence is that of Orotate phosphoribosyltransferase from Picrophilus torridus (strain ATCC 700027 / DSM 9790 / JCM 10055 / NBRC 100828 / KAW 2/3).